The chain runs to 811 residues: Probable disease resistance protein At5g04720 (811 aa).

Positions 1–147 constitute an RPW8 domain; the sequence is MADIIGGEVV…KVDSLNEKLG (147 aa). 2 consecutive NB-ARC domains span residues 180–242 and 312–437; these read VGLD…VSQS and TYDV…NVLV. Residue 207 to 214 coordinates ATP; sequence GMSGSGKT. 5 LRR repeats span residues 650–674, 676–699, 700–722, 724–746, and 748–769; these read FPKL…ICGI, SLNS…SKLK, ALQL…ICEL, RLKY…IGKV, and TLEK…VVLL.

Belongs to the disease resistance NB-LRR family.

Probable disease resistance protein. This chain is Probable disease resistance protein At5g04720, found in Arabidopsis thaliana (Mouse-ear cress).